Consider the following 779-residue polypeptide: Cell division control protein 4 (779 aa).

The segment at 39–80 (AGTHRNSSTAKTVETEDGEEDIDEYQRKRAAGSGESTPERSD) is disordered. Residues 82-85 (KRVK) carry the Nuclear localization signal motif. Serine 104 is modified (phosphoserine). The region spanning 272-319 (RDLITSLPFEISLKIFNYLQFEDIINSLGVSQNWNKIIRKSTSLWKKL) is the F-box domain. 7 WD repeats span residues 380–408 (HMTS…RVYD), 420–449 (GHDG…RVWD), 461–493 (GHNS…HVWK), 528–556 (GHMA…IVWD), 568–598 (GHTD…RIWD), 630–658 (GHTA…RGWD), and 669–698 (HHTN…NIYN).

In terms of assembly, interacts with DCD53 and SKP1. Component of the SCF(CDC4) complex containing CDC53, SKP1, RBX1 and CDC4. CDC34. Interacts with CDC6 and CIC1. Interacts with SIC1; the interaction involves a SIC1 double phosphorylated motif (degron). Homodimerizes; the dimerization increases SIC1 ubiquitination in vitro.

The protein resides in the nucleus. It participates in protein modification; protein ubiquitination. Its function is as follows. Substrate recognition component of a SCF (SKP1-CUL1-F-box protein) E3 ubiquitin-protein ligase complex which mediates the ubiquitination and subsequent proteasomal degradation of target proteins. Recognizes and binds to phosphorylated target proteins. Directs ubiquitination of the phosphorylated CDK inhibitor SIC1. Involved in the degradation of CDC6 together with CDC34/UBC3 and CDC53, and in restricting the degradation of FAR1 to the nucleus. Is essential for initiation of DNA replication and separation of the spindle pole bodies to form the poles of the mitotic spindle. It also plays a role in bud development, fusion of zygotic nuclei after conjugation and various aspects of sporulation. Required for HTA1-HTB1 locus transcription activation. Required for G1/S and G2/M transition. The sequence is that of Cell division control protein 4 (CDC4) from Saccharomyces cerevisiae (strain ATCC 204508 / S288c) (Baker's yeast).